Reading from the N-terminus, the 138-residue chain is MWYQKTLTLSAKSRGFHLVTDEILNQLADMPRVNIGLLHLLLQHTSASLTLNENCDPTVRHDMERFFLRTVPDNGNYEHDYEGADDMPSHIKSSMLGTSLVLPVHKGRIQTGTWQGIWLGEHRIHGGSRRIIATLQGE.

It belongs to the UPF0047 family.

This Escherichia coli O157:H7 protein is UPF0047 protein YjbQ (yjbQ).